A 163-amino-acid chain; its full sequence is MRQFQSFSTTVERELAAAPTARPARTAAGYDEPENFLEVEVRDPRTHFPHGDSNRGMYTDYLVVCRTNLPSFPQRVSQVRRRYSDFEFFKRCLFKELSLSAHPRVVIPALPGKILWARRFHDEVIEERREGLAQWLSTVAGHPLLQSGSKVLVRFLQDEVFNG.

The region spanning 39 to 162 is the PX domain; the sequence is VEVRDPRTHF…VRFLQDEVFN (124 aa). The a 1,2-diacyl-sn-glycero-3-phospho-(1D-myo-inositol-3-phosphate) site is built by Arg-82, Ser-84, Lys-113, Arg-119, and Arg-128.

Belongs to the sorting nexin family.

The protein localises to the cytoplasm. It is found in the golgi apparatus membrane. The protein resides in the prevacuolar compartment membrane. Functionally, required for retention of late Golgi membrane proteins. Component of the retrieval machinery that functions by direct interaction with the cytosolic tails of certain TGN membrane proteins during the sorting/budding process at the prevacuolar compartment. Binds phosphatidylinositol 3-phosphate (PtdIns(P3)). The polypeptide is Sorting nexin-3 (SNX3) (Eremothecium gossypii (strain ATCC 10895 / CBS 109.51 / FGSC 9923 / NRRL Y-1056) (Yeast)).